The sequence spans 372 residues: DNA-directed RNA polymerase subunit alpha (372 aa).

The alpha N-terminal domain (alpha-NTD) stretch occupies residues 1–268 (MIFDEDSNSV…DQFQPFINFD (268 aa)). The tract at residues 280–372 (KDALPYDSNL…ESLSKQYSEE (93 aa)) is alpha C-terminal domain (alpha-CTD).

It belongs to the RNA polymerase alpha chain family. Homodimer. The RNAP catalytic core consists of 2 alpha, 1 beta, 1 beta' and 1 omega subunit. When a sigma factor is associated with the core the holoenzyme is formed, which can initiate transcription.

The catalysed reaction is RNA(n) + a ribonucleoside 5'-triphosphate = RNA(n+1) + diphosphate. In terms of biological role, DNA-dependent RNA polymerase catalyzes the transcription of DNA into RNA using the four ribonucleoside triphosphates as substrates. This chain is DNA-directed RNA polymerase subunit alpha, found in Ehrlichia canis (strain Jake).